A 306-amino-acid polypeptide reads, in one-letter code: Glutaminase (306 aa).

Residues Ser61, Asn111, Glu157, Asn164, Tyr188, Tyr240, and Val258 each coordinate substrate.

The protein belongs to the glutaminase family. Homotetramer.

The catalysed reaction is L-glutamine + H2O = L-glutamate + NH4(+). In Pseudoalteromonas atlantica (strain T6c / ATCC BAA-1087), this protein is Glutaminase.